A 119-amino-acid polypeptide reads, in one-letter code: Dolichyl-diphosphooligosaccharide--protein glycosyltransferase subunit DAD1 (119 aa).

The residue at position 2 (Ser2) is an N-acetylserine. Topologically, residues 2–30 are cytoplasmic; it reads SASVASVISRFLEEYLSSTPQRLKLLDAY. A helical membrane pass occupies residues 31–51; it reads LLYILLTGALQFGYCLLVGTF. Residues 52 to 54 are Lumenal-facing; sequence PFN. A helical membrane pass occupies residues 55 to 75; that stretch reads SFLSGFISCVGSFILAGNGSL. The Cytoplasmic portion of the chain corresponds to 76-81; the sequence is RNRSNN. Residues 82–98 traverse the membrane as a helical segment; sequence VFTLVRCFSSLVTLFYS. Residues 99–119 lie on the Lumenal side of the membrane; that stretch reads RSPPREVPRGACIALFCERGN.

Belongs to the DAD/OST2 family. In terms of assembly, component of the oligosaccharyltransferase (OST) complex. OST exists in two different complex forms which contain common core subunits RPN1, RPN2, OST48, OST4, DAD1 and TMEM258, either STT3A or STT3B as catalytic subunits, and form-specific accessory subunits. STT3A complex assembly occurs through the formation of 3 subcomplexes. Subcomplex 1 contains RPN1 and TMEM258, subcomplex 2 contains the STT3A-specific subunits STT3A, DC2/OSTC, and KCP2 as well as the core subunit OST4, and subcomplex 3 contains RPN2, DAD1, and OST48. The STT3A complex can form stable complexes with the Sec61 complex or with both the Sec61 and TRAP complexes.

The protein localises to the endoplasmic reticulum membrane. It participates in protein modification; protein glycosylation. Its function is as follows. Subunit of the oligosaccharyl transferase (OST) complex that catalyzes the initial transfer of a defined glycan (Glc(3)Man(9)GlcNAc(2) in eukaryotes) from the lipid carrier dolichol-pyrophosphate to an asparagine residue within an Asn-X-Ser/Thr consensus motif in nascent polypeptide chains, the first step in protein N-glycosylation. N-glycosylation occurs cotranslationally and the complex associates with the Sec61 complex at the channel-forming translocon complex that mediates protein translocation across the endoplasmic reticulum (ER). All subunits are required for a maximal enzyme activity. This Canis lupus familiaris (Dog) protein is Dolichyl-diphosphooligosaccharide--protein glycosyltransferase subunit DAD1.